Here is a 109-residue protein sequence, read N- to C-terminus: MKCLFGFLFIMLVAFLQDVHGVDSCIGKPCKVKGEDMKDIKEKKIEDIKEEIKNVKKEIFEDVDDELLDDNIRDDKIRDAKPSLRRVHWTRIRPGIPAVIKIGSSIGKK.

A signal peptide spans 1 to 21 (MKCLFGFLFIMLVAFLQDVHG). The propeptide occupies 22-77 (VDSCIGKPCKVKGEDMKDIKEKKIEDIKEEIKNVKKEIFEDVDDELLDDNIRDDKI). An Isoleucine amide modification is found at I106.

Belongs to the arminin family. In terms of tissue distribution, expressed in the ectodermal epithelium.

It localises to the secreted. Its subcellular location is the target cell membrane. Its function is as follows. Antimicrobial peptide with a broad-spectrum antimicrobial activity. Keeps its antibacterial activity under a wide range of salt concentrations that mimic physiological conditions of human blood, which is surprising, since Hydra is an obligate freshwater animal with nearly no salt tolerance. Does not affect red blood cells. The sequence is that of Arminin 6560 from Hydra vulgaris (Hydra).